Reading from the N-terminus, the 167-residue chain is NADH-quinone oxidoreductase subunit B 2 (167 aa).

4 residues coordinate [4Fe-4S] cluster: Cys38, Cys39, Cys104, and Cys133.

This sequence belongs to the complex I 20 kDa subunit family. NDH-1 is composed of 14 different subunits. Subunits NuoB, C, D, E, F, and G constitute the peripheral sector of the complex. It depends on [4Fe-4S] cluster as a cofactor.

Its subcellular location is the cell membrane. It carries out the reaction a quinone + NADH + 5 H(+)(in) = a quinol + NAD(+) + 4 H(+)(out). In terms of biological role, NDH-1 shuttles electrons from NADH, via FMN and iron-sulfur (Fe-S) centers, to quinones in the respiratory chain. The immediate electron acceptor for the enzyme in this species is believed to be ubiquinone. Couples the redox reaction to proton translocation (for every two electrons transferred, four hydrogen ions are translocated across the cytoplasmic membrane), and thus conserves the redox energy in a proton gradient. In Roseiflexus sp. (strain RS-1), this protein is NADH-quinone oxidoreductase subunit B 2.